We begin with the raw amino-acid sequence, 880 residues long: Leucine--tRNA ligase (880 aa).

The short motif at 46–56 is the 'HIGH' region element; the sequence is PYPSGALHMGH. A 'KMSKS' region motif is present at residues 638–642; the sequence is KMSKS. Lys-641 lines the ATP pocket.

It belongs to the class-I aminoacyl-tRNA synthetase family.

Its subcellular location is the cytoplasm. The enzyme catalyses tRNA(Leu) + L-leucine + ATP = L-leucyl-tRNA(Leu) + AMP + diphosphate. This Stenotrophomonas maltophilia (strain R551-3) protein is Leucine--tRNA ligase.